The sequence spans 563 residues: uncharacterized protein (563 aa).

At 1-13 the chain is on the cytoplasmic side; that stretch reads MASRSCICQVSAG. The chain crosses the membrane as a helical span at residues 14–34; it reads IIFLIGAALLVAGLVIVLNVF. The Lumenal portion of the chain corresponds to 35–528; it reads PNIVNNQIND…LFTPVSTVNT (494 aa). N-linked (GlcNAc...) asparagine glycans are attached at residues Asn-43, Asn-112, Asn-133, Asn-188, Asn-265, Asn-295, Asn-315, and Asn-502. The helical transmembrane segment at 529-549 threads the bilayer; it reads ICWIAVGLGAGLIALSIVMVI. Topologically, residues 550–563 are cytoplasmic; that stretch reads VSFCCFRDEHHKTS.

Belongs to the CD36 family.

Its subcellular location is the membrane. This is an uncharacterized protein from Caenorhabditis elegans.